The primary structure comprises 577 residues: MNIQALLSEKVSQAMIVAGAPANCEPQVRQSAKVQFGDYQANGMMAVAKKLGMAPRQLAEQVLTHLDLNGIASKVEIAGPGFINIFLDPAFLAEHVQQALASERLGVAKPAKQTVVIDYSAPNVAKEMHVGHLRSTIIGDAAVRTLEFLGHHVIRANHVGDWGTQFGMLIAWLEKQQQENAGEMALADLEGFYRDAKKHYDEDEAFAERARNYVVKLQGGDPYFLDMWRKLVDITMTQNQITYNRLNVTLTRDDVMGESLYNPMLPGIVADLKAQGLAVESEGATVVFLDEYKNKEGEPMGVIIQKKDGGYLYTTTDIACAKYRYETLHADRVLYYIDSRQHQHLMQAWTIVRKAGYVPDSVPLEHHMFGMMLGKDGKPFKTRAGGTVKLADLLDEALERARRLVAEKNPDMPADELEKLANAVGIGAVKYADLSKNRTTDYIFDWDNMLAFEGNTAPYMQYAYTRVLSVFRKAEIDESALSSAPVVIREDREAQLAARLLQFEETLTVVAREGTPHVMCAYLYDIAGLFSGFYEHCPILSAENEEVRNSRLKLAQLTAKTLKLGLDTLGIETVERM.

The 'HIGH' region motif lies at 122 to 132; the sequence is PNVAKEMHVGH.

The protein belongs to the class-I aminoacyl-tRNA synthetase family. Monomer.

It localises to the cytoplasm. The enzyme catalyses tRNA(Arg) + L-arginine + ATP = L-arginyl-tRNA(Arg) + AMP + diphosphate. The protein is Arginine--tRNA ligase of Citrobacter koseri (strain ATCC BAA-895 / CDC 4225-83 / SGSC4696).